The chain runs to 265 residues: Transcription factor BHLH089 (265 aa).

The interval 1 to 132 (MDPAPTLAAE…PPPPEPPKQD (132 aa)) is disordered. Composition is skewed to gly residues over residues 17–29 (LGGGGGGGGGGRG) and 44–53 (SRGGGGGGGA). A compositionally biased stretch (polar residues) spans 95-105 (SKSSGDNSSLR). The interval 142–155 (QATDSHSLAERARR) is basic motif; degenerate. One can recognise a bHLH domain in the interval 142 to 192 (QATDSHSLAERARREKISERMKILQDLVPGCNKVIGKASVLDEIINYIQAL). The helix-loop-helix motif stretch occupies residues 156 to 192 (EKISERMKILQDLVPGCNKVIGKASVLDEIINYIQAL).

Belongs to the bHLH protein family. Interacts with RSS3.

Its subcellular location is the nucleus. Transcription factor that may regulate jasmonate-regulated genes. This chain is Transcription factor BHLH089, found in Oryza sativa subsp. japonica (Rice).